The chain runs to 478 residues: Phosphatidylinositol 4-kinase type 2-alpha (478 aa).

M1 bears the N-acetylmethionine mark. The tract at residues 1–57 (MDETSPLVSPERAQPPEYTFPSVSGAHFPQVPGGAVRVAAAGSGPSPPCSPGHDRER) is disordered. 5 positions are modified to phosphoserine: S5, S9, S43, S46, and S50. The segment covering 31 to 44 (VPGGAVRVAAAGSG) has biased composition (low complexity). Positions 123–452 (SIYPERIYQG…VQMPPVIVET (330 aa)) constitute a PI3K/PI4K catalytic domain. Residues 129 to 135 (IYQGSSG) are G-loop. Residues 130–136 (YQGSSGS) and K151 contribute to the ATP site. Residues 156–158 (EPY) form an important for substrate binding region. Residues 164–177 (KWTKWLQKLCCPCC) are important for interaction with membranes. 4 S-palmitoyl cysteine lipidation sites follow: C173, C174, C176, and C177. 260-263 (QLFV) contacts ATP. Positions 267-275 (KDADYWLRR) are important for interaction with membranes. The segment at 304 to 312 (RNTDRGNDN) is catalytic loop. The activation loop stretch occupies residues 343 to 363 (AIDNGLAFPLKHPDSWRAYPF). An ATP-binding site is contributed by D345. An important for interaction with membranes region spans residues 358–367 (WRAYPFYWAW). S461 is subject to Phosphoserine.

It belongs to the PI3/PI4-kinase family. Type II PI4K subfamily. As to quaternary structure, associates with the BLOC-1 and the AP-3 complexes; the BLOC-1 complex is required for optimal binding of PI4K2A to the AP-3 complex. Interacts with BLOC1S5 and DTNBP1. Interacts with FOS; this interaction may enhance phosphatidylinositol phosphorylation activity. Interacts with ITCH. Interacts with ATG9A. Ubiquitinated by ITCH; this does not lead to proteasomal degradation. Post-translationally, palmitoylated. Palmitoylated by ZDHHC3 and ZDHHC7 in the CCPCC motif. Palmitoylation is cholesterol-dependent, and required for TGN localization. Detected in adult brain, especially in neurons in the cerebellum, brain cortex, dorsal root ganglion and spinal cord (at protein level).

It is found in the golgi apparatus. It localises to the trans-Golgi network membrane. Its subcellular location is the membrane raft. The protein localises to the endosome. The protein resides in the endosome membrane. It is found in the cytoplasmic vesicle. It localises to the cell projection. Its subcellular location is the dendrite. The protein localises to the presynaptic cell membrane. The protein resides in the synapse. It is found in the synaptosome. It localises to the mitochondrion. Its subcellular location is the membrane. The protein localises to the cell membrane. The protein resides in the perikaryon. It is found in the neuron projection. It carries out the reaction a 1,2-diacyl-sn-glycero-3-phospho-(1D-myo-inositol) + ATP = a 1,2-diacyl-sn-glycero-3-phospho-(1D-myo-inositol 4-phosphate) + ADP + H(+). In terms of biological role, membrane-bound phosphatidylinositol-4 kinase (PI4-kinase) that catalyzes the phosphorylation of phosphatidylinositol (PI) to phosphatidylinositol 4-phosphate (PI4P), a lipid that plays important roles in endocytosis, Golgi function, protein sorting and membrane trafficking and is required for prolonged survival of neurons. Besides, phosphorylation of phosphatidylinositol (PI) to phosphatidylinositol 4-phosphate (PI4P) is the first committed step in the generation of phosphatidylinositol 4,5-bisphosphate (PIP2), a precursor of the second messenger inositol 1,4,5-trisphosphate (InsP3). The chain is Phosphatidylinositol 4-kinase type 2-alpha (Pi4k2a) from Rattus norvegicus (Rat).